Consider the following 460-residue polypeptide: Chromosomal replication initiator protein DnaA (460 aa).

The domain I, interacts with DnaA modulators stretch occupies residues 1-84 (MAVSLWQQCI…RFDIGSRPSA (84 aa)). Residues 84 to 123 (AKKPEPAPVAAVRVPSPQTKASVGTAFNTTEPVANTNHRS) form a domain II region. Residues 124–340 (NINPTYQFDN…GALNRVIANA (217 aa)) form a domain III, AAA+ region region. ATP-binding residues include G168, G170, K171, and T172. The interval 341–460 (NFTGRPITID…YANLIRTLSS (120 aa)) is domain IV, binds dsDNA.

The protein belongs to the DnaA family. As to quaternary structure, oligomerizes as a right-handed, spiral filament on DNA at oriC.

Its subcellular location is the cytoplasm. Plays an essential role in the initiation and regulation of chromosomal replication. ATP-DnaA binds to the origin of replication (oriC) to initiate formation of the DNA replication initiation complex once per cell cycle. Binds the DnaA box (a 9 base pair repeat at the origin) and separates the double-stranded (ds)DNA. Forms a right-handed helical filament on oriC DNA; dsDNA binds to the exterior of the filament while single-stranded (ss)DNA is stabiized in the filament's interior. The ATP-DnaA-oriC complex binds and stabilizes one strand of the AT-rich DNA unwinding element (DUE), permitting loading of DNA polymerase. After initiation quickly degrades to an ADP-DnaA complex that is not apt for DNA replication. Binds acidic phospholipids. This chain is Chromosomal replication initiator protein DnaA, found in Shewanella oneidensis (strain ATCC 700550 / JCM 31522 / CIP 106686 / LMG 19005 / NCIMB 14063 / MR-1).